The sequence spans 218 residues: GCN5-related N-acetyltransferase 9 (218 aa).

Positions Ser-36–Thr-183 constitute an N-acetyltransferase domain. Residues Met-112–Ala-114, Gly-120–Lys-125, Asn-152–Ala-154, and Phe-159 contribute to the acetyl-CoA site.

This sequence belongs to the acetyltransferase family. GNAT subfamily. In terms of assembly, oligomer. Expressed throughout the plant.

It is found in the cytoplasm. It localises to the nucleus. It catalyses the reaction an N-terminal L-alpha-aminoacyl-[protein] + acetyl-CoA = N-terminal N(alpha)-acetyl-L-alpha-aminoacyl-[protein] + CoA + H(+). The catalysed reaction is L-lysyl-[protein] + acetyl-CoA = N(6)-acetyl-L-lysyl-[protein] + CoA + H(+). Probable protein acetyltransferase with dual specificity triggering both N-alpha-acetylation (NTA) and epsilon-lysine acetylation (KA). The protein is GCN5-related N-acetyltransferase 9 of Arabidopsis thaliana (Mouse-ear cress).